Reading from the N-terminus, the 388-residue chain is Succinate--CoA ligase [ADP-forming] subunit beta (388 aa).

An ATP-grasp domain is found at 9–244; that stretch reads KSLFAEYGLP…PSQDDAREAH (236 aa). ATP-binding positions include lysine 46, 53–55, glutamate 99, threonine 102, and glutamate 107; that span reads GRG. Asparagine 199 and aspartate 213 together coordinate Mg(2+). Residues asparagine 264 and 321-323 each bind substrate; that span reads GIV.

It belongs to the succinate/malate CoA ligase beta subunit family. In terms of assembly, heterotetramer of two alpha and two beta subunits. It depends on Mg(2+) as a cofactor.

It catalyses the reaction succinate + ATP + CoA = succinyl-CoA + ADP + phosphate. The catalysed reaction is GTP + succinate + CoA = succinyl-CoA + GDP + phosphate. It functions in the pathway carbohydrate metabolism; tricarboxylic acid cycle; succinate from succinyl-CoA (ligase route): step 1/1. Succinyl-CoA synthetase functions in the citric acid cycle (TCA), coupling the hydrolysis of succinyl-CoA to the synthesis of either ATP or GTP and thus represents the only step of substrate-level phosphorylation in the TCA. The beta subunit provides nucleotide specificity of the enzyme and binds the substrate succinate, while the binding sites for coenzyme A and phosphate are found in the alpha subunit. In Shewanella frigidimarina (strain NCIMB 400), this protein is Succinate--CoA ligase [ADP-forming] subunit beta.